The sequence spans 773 residues: Kelch domain-containing protein 7A (773 aa).

The chain crosses the membrane as a helical span at residues 23–40 (VVLSAAALLLVTAAYKLY). N-linked (GlcNAc...) asparagine glycosylation is present at N61. Disordered regions lie at residues 64–99 (EALGQLAFQEAPPGTLPRGRRRRKASKGAGTSLDYS) and 114–207 (SEEA…APNG). The residue at position 89 (S89) is a Phosphoserine. The segment covering 114-126 (SEEATRKGSDESQ) has biased composition (basic and acidic residues). N-linked (GlcNAc...) asparagine glycosylation occurs at N256. Residues 296–355 (KADSRPVPCPAALADAPSPGPGPEPLVTGAASRDEAANTAGGGASEAASPQPVASPSAPG) are disordered. 5 Kelch repeats span residues 323-370 (TGAA…ENPE), 488-534 (KRLV…LCTL), 537-585 (YLFV…ALEG), 586-628 (HLYA…ATVC), and 631-673 (EIFV…AVNG). A compositionally biased stretch (low complexity) spans 340–354 (SEAASPQPVASPSAP). S361 is modified (phosphoserine).

Its subcellular location is the membrane. The sequence is that of Kelch domain-containing protein 7A (Klhdc7a) from Mus musculus (Mouse).